The following is a 156-amino-acid chain: Small ribosomal subunit protein eS10 (156 aa).

Positions 91–156 (LKRQTRPEAA…FGRGRQEQEE (66 aa)) are disordered. A compositionally biased stretch (basic and acidic residues) spans 95 to 119 (TRPEAARPRPKEGAPRAQVGEDRAG).

This sequence belongs to the eukaryotic ribosomal protein eS10 family.

It localises to the cytoplasm. In Lumbricus rubellus (Humus earthworm), this protein is Small ribosomal subunit protein eS10 (RPS10).